Consider the following 796-residue polypeptide: RalBP1-associated Eps domain-containing protein 1 (796 aa).

In terms of domain architecture, EH 1 spans glutamate 10–alanine 113. Positions lysine 105–proline 237 are disordered. Polar residues predominate over residues serine 115–tyrosine 126. Phosphoserine occurs at positions 143, 145, 162, 166, and 170. Residues serine 145–aspartate 156 show a composition bias toward polar residues. Threonine 173 is subject to Phosphothreonine. 2 positions are modified to phosphoserine: serine 272 and serine 273. The EH 2 domain maps to glutamine 285 to leucine 374. Residue tyrosine 288 is modified to Phosphotyrosine. The residue at position 307 (serine 307) is a Phosphoserine. One can recognise an EF-hand domain in the interval leucine 318–arginine 353. Residues aspartate 331, aspartate 333, aspartate 335, and glutamate 342 each coordinate Ca(2+). The disordered stretch occupies residues serine 377–threonine 433. Over residues leucine 407 to threonine 433 the composition is skewed to polar residues. 4 positions are modified to phosphoserine: serine 475, serine 482, serine 489, and serine 540. Residues glycine 506 to asparagine 543 show a composition bias toward polar residues. 2 disordered regions span residues glycine 506 to glutamine 624 and alanine 638 to glycine 725. Phosphothreonine is present on threonine 544. The segment covering threonine 544–glutamine 554 has biased composition (pro residues). A Phosphoserine modification is found at serine 562. Positions leucine 563 to glycine 574 are enriched in polar residues. A compositionally biased stretch (low complexity) spans glutamine 575–proline 584. Positions proline 585–alanine 596 are enriched in pro residues. Positions threonine 612–glutamate 623 are enriched in polar residues. The interaction with RALBP1 stretch occupies residues histidine 652–leucine 796. Composition is skewed to basic and acidic residues over residues alanine 671–threonine 681 and lysine 708–glutamine 722. Phosphoserine is present on residues serine 709 and serine 740. The stretch at serine 751–arginine 791 forms a coiled coil.

In terms of assembly, homodimer (Potential). Interacts with RAB11FIP2. Interacts with RALBP1, CRK and GRB2. Binding to RALBP1 does not affect its Ral-binding activity. Forms a complex with the SH3 domains of CRK and GRB2 which may link it to an EGF-responsive tyrosine kinase. Interacts with AMPH, ITSN1 (via SH3 domains) and SGIP1; may be involved in clathrin-mediated endocytosis. EGF stimulates phosphorylation on Tyr-residues. In terms of tissue distribution, widely expressed with highest levels in heart and testis.

It is found in the membrane. The protein localises to the clathrin-coated pit. May coordinate the cellular actions of activated EGF receptors and Ral-GTPases. The sequence is that of RalBP1-associated Eps domain-containing protein 1 (REPS1) from Homo sapiens (Human).